We begin with the raw amino-acid sequence, 343 residues long: Anthranilate phosphoribosyltransferase (343 aa).

Residues Gly-84, 87–88 (GD), Thr-92, 94–97 (NIST), 112–120 (KHGNRSASS), and Ser-124 contribute to the 5-phospho-alpha-D-ribose 1-diphosphate site. An anthranilate-binding site is contributed by Gly-84. Ser-96 provides a ligand contact to Mg(2+). An anthranilate-binding site is contributed by Asn-115. Arg-170 is a binding site for anthranilate. Residues Asp-229 and Glu-230 each contribute to the Mg(2+) site.

It belongs to the anthranilate phosphoribosyltransferase family. Homodimer. The cofactor is Mg(2+).

The enzyme catalyses N-(5-phospho-beta-D-ribosyl)anthranilate + diphosphate = 5-phospho-alpha-D-ribose 1-diphosphate + anthranilate. It functions in the pathway amino-acid biosynthesis; L-tryptophan biosynthesis; L-tryptophan from chorismate: step 2/5. Catalyzes the transfer of the phosphoribosyl group of 5-phosphorylribose-1-pyrophosphate (PRPP) to anthranilate to yield N-(5'-phosphoribosyl)-anthranilate (PRA). The protein is Anthranilate phosphoribosyltransferase of Bordetella pertussis (strain Tohama I / ATCC BAA-589 / NCTC 13251).